The chain runs to 362 residues: 3-dehydroquinate synthase (362 aa).

Residues 71 to 76, 105 to 109, 129 to 130, Lys142, Lys151, and 169 to 172 contribute to the NAD(+) site; these read DGEQYK, GVVGD, TT, and CLNT. Zn(2+) contacts are provided by Glu184, His247, and His264.

It belongs to the sugar phosphate cyclases superfamily. Dehydroquinate synthase family. The cofactor is Co(2+). It depends on Zn(2+) as a cofactor. NAD(+) serves as cofactor.

Its subcellular location is the cytoplasm. The catalysed reaction is 7-phospho-2-dehydro-3-deoxy-D-arabino-heptonate = 3-dehydroquinate + phosphate. It functions in the pathway metabolic intermediate biosynthesis; chorismate biosynthesis; chorismate from D-erythrose 4-phosphate and phosphoenolpyruvate: step 2/7. Functionally, catalyzes the conversion of 3-deoxy-D-arabino-heptulosonate 7-phosphate (DAHP) to dehydroquinate (DHQ). This Enterobacter sp. (strain 638) protein is 3-dehydroquinate synthase.